A 466-amino-acid polypeptide reads, in one-letter code: Glutamate-1-semialdehyde 2,1-aminomutase (466 aa).

Lysine 292 is subject to N6-(pyridoxal phosphate)lysine.

It belongs to the class-III pyridoxal-phosphate-dependent aminotransferase family. HemL subfamily. As to quaternary structure, homodimer. It depends on pyridoxal 5'-phosphate as a cofactor.

The protein resides in the cytoplasm. It catalyses the reaction (S)-4-amino-5-oxopentanoate = 5-aminolevulinate. The protein operates within porphyrin-containing compound metabolism; protoporphyrin-IX biosynthesis; 5-aminolevulinate from L-glutamyl-tRNA(Glu): step 2/2. This Tropheryma whipplei (strain TW08/27) (Whipple's bacillus) protein is Glutamate-1-semialdehyde 2,1-aminomutase.